The primary structure comprises 202 residues: Translation initiation factor IF-3 (202 aa).

Residues 172–202 form a disordered region; it reads KTRASARHPEVPGAGSVQDIDATGDTDGSPH.

Belongs to the IF-3 family. In terms of assembly, monomer.

The protein localises to the cytoplasm. In terms of biological role, IF-3 binds to the 30S ribosomal subunit and shifts the equilibrium between 70S ribosomes and their 50S and 30S subunits in favor of the free subunits, thus enhancing the availability of 30S subunits on which protein synthesis initiation begins. In Mycobacterium leprae (strain TN), this protein is Translation initiation factor IF-3.